Consider the following 726-residue polypeptide: ORC ubiquitin ligase 1 (726 aa).

The RING-type; degenerate zinc finger occupies 18–56 (CHICLGKVRQPVICINNHVFCSICIDLWLKNNSQCPACR). Coiled coils occupy residues 87-129 (LRKT…TILD) and 155-270 (ETVA…MNSI). Residue S210 is modified to Phosphoserine. Residues 274-335 (ALPADGKGSK…ARQESTSKAE (62 aa)) form a disordered region. A compositionally biased stretch (basic and acidic residues) spans 280–290 (KGSKGSEEDVA). The span at 300–320 (KQPSSSTSSSSHLAKPSSSRL) shows a compositional bias: low complexity. Positions 321–334 (CDTSSARQESTSKA) are enriched in polar residues. Phosphoserine occurs at positions 526, 553, 561, 568, 570, 719, and 721. The interval 687–726 (QSPWSTSFVPEKRNKNVNQSTKRKIQSSLSNASPSKATKS) is disordered. Over residues 702-726 (NVNQSTKRKIQSSLSNASPSKATKS) the composition is skewed to polar residues.

As to quaternary structure, associates with ORC complex. Binds to chromatin; association is cell cycle-regulated, absent from mitotic chromosomes, is associated with chromatin from G1 and partially released from chromatin from mid S-phase. Post-translationally, auto-ubiquitinated.

Its subcellular location is the chromosome. The catalysed reaction is S-ubiquitinyl-[E2 ubiquitin-conjugating enzyme]-L-cysteine + [acceptor protein]-L-lysine = [E2 ubiquitin-conjugating enzyme]-L-cysteine + N(6)-ubiquitinyl-[acceptor protein]-L-lysine.. E3 ubiquitin ligase essential for DNA replication origin activation during S phase. Acts as a replication origin selector which selects the origins to be fired and catalyzes the multi-mono-ubiquitination of a subset of chromatin-bound ORC3 and ORC5 during S-phase. In Pongo abelii (Sumatran orangutan), this protein is ORC ubiquitin ligase 1 (OBI1).